Consider the following 1040-residue polypeptide: Multidrug resistance protein MdtB (1040 aa).

The next 12 helical transmembrane spans lie at Phe16–Ile36, Leu347–Ala367, Ile369–Leu389, Leu396–Ile416, Ile440–Phe460, Phe472–Pro492, Trp537–Ile557, Leu863–Ile883, Phe888–Ala908, Ile911–Val931, Ile968–Val988, and Ile998–Ile1018.

It belongs to the resistance-nodulation-cell division (RND) (TC 2.A.6) family. MdtB subfamily. In terms of assembly, part of a tripartite efflux system composed of MdtA, MdtB and MdtC. MdtB forms a heteromultimer with MdtC.

It is found in the cell inner membrane. Functionally, the MdtABC tripartite complex confers resistance against novobiocin and deoxycholate. The chain is Multidrug resistance protein MdtB from Escherichia fergusonii (strain ATCC 35469 / DSM 13698 / CCUG 18766 / IAM 14443 / JCM 21226 / LMG 7866 / NBRC 102419 / NCTC 12128 / CDC 0568-73).